Reading from the N-terminus, the 372-residue chain is tRNA-specific 2-thiouridylase MnmA (372 aa).

ATP-binding positions include 16–23 (GMSGGVDS) and Met-42. Residues 102-104 (NPD) form an interaction with target base in tRNA region. Cys-107 functions as the Nucleophile in the catalytic mechanism. Cys-107 and Cys-205 are oxidised to a cystine. Gly-132 is a binding site for ATP. Residues 155–157 (KDQ) form an interaction with tRNA region. The active-site Cysteine persulfide intermediate is Cys-205. Residues 317–318 (RY) form an interaction with tRNA region.

The protein belongs to the MnmA/TRMU family.

It localises to the cytoplasm. It catalyses the reaction S-sulfanyl-L-cysteinyl-[protein] + uridine(34) in tRNA + AH2 + ATP = 2-thiouridine(34) in tRNA + L-cysteinyl-[protein] + A + AMP + diphosphate + H(+). Functionally, catalyzes the 2-thiolation of uridine at the wobble position (U34) of tRNA, leading to the formation of s(2)U34. This chain is tRNA-specific 2-thiouridylase MnmA, found in Shewanella denitrificans (strain OS217 / ATCC BAA-1090 / DSM 15013).